The following is a 78-amino-acid chain: Putative defensin-like protein 133 (78 aa).

A signal peptide spans 1–24 (MKRSFLLLLTILTIFIILGQGVMG). 4 disulfides stabilise this stretch: Cys-34-Cys-75, Cys-44-Cys-68, Cys-49-Cys-72, and Cys-53-Cys-74.

Belongs to the DEFL family.

Its subcellular location is the secreted. This Arabidopsis thaliana (Mouse-ear cress) protein is Putative defensin-like protein 133 (LCR33).